A 262-amino-acid chain; its full sequence is Type III pantothenate kinase (262 aa).

Position 6-13 (Asp-6–Val-13) interacts with ATP. Substrate is bound by residues Tyr-100 and Gly-107–Arg-110. Residue Asp-109 is the Proton acceptor of the active site. Asp-129 contributes to the K(+) binding site. ATP is bound at residue Thr-132. Substrate is bound at residue Thr-184.

It belongs to the type III pantothenate kinase family. Homodimer. Requires NH4(+) as cofactor. K(+) is required as a cofactor.

It is found in the cytoplasm. The enzyme catalyses (R)-pantothenate + ATP = (R)-4'-phosphopantothenate + ADP + H(+). It functions in the pathway cofactor biosynthesis; coenzyme A biosynthesis; CoA from (R)-pantothenate: step 1/5. Functionally, catalyzes the phosphorylation of pantothenate (Pan), the first step in CoA biosynthesis. In Bacillus cereus (strain G9842), this protein is Type III pantothenate kinase.